The following is a 193-amino-acid chain: CASP-like protein 2U1 (193 aa).

Topologically, residues 1-18 (MAMALALGGGQDAERKVK) are cytoplasmic. The chain crosses the membrane as a helical span at residues 19-39 (VAEVALRALLCGLGALAAALV). The Extracellular segment spans residues 40–61 (ATDTQTRTFFSLQKKASYTDMK). Residues 62–82 (AMVFLVDAAAVAAGYSLLQLA) traverse the membrane as a helical segment. Residues 83-113 (ARCCGGGAMSSGRGDGGGRGRALSWCVFSCD) are Cytoplasmic-facing. Residues 114–134 (QALAYVLLAAVAAALQASVVA) form a helical membrane-spanning segment. Residues 135–156 (KRGQPELQWMGICALYGAFCRQ) lie on the Extracellular side of the membrane. Residues 157–177 (AGAGLATAVVAGLAAVLLAFL) traverse the membrane as a helical segment. At 178-193 (SAFNLFRLYGSGGTKS) the chain is on the cytoplasmic side.

The protein belongs to the Casparian strip membrane proteins (CASP) family. As to quaternary structure, homodimer and heterodimers.

It localises to the cell membrane. This chain is CASP-like protein 2U1, found in Sorghum bicolor (Sorghum).